The following is a 680-amino-acid chain: ATPase family AAA domain-containing protein FIGL1 (680 aa).

Disordered regions lie at residues 214-234, 250-275, and 288-352; these read YGNS…NQDR, FGTK…GAPN, and VRQK…GGKT. Over residues 295–308 the composition is skewed to polar residues; sequence TESPSSCLSPQSDK. Positions 313 to 323 are enriched in gly residues; that stretch reads RGYGSRSGGLR. The segment covering 336–346 has biased composition (polar residues); sequence TNGNNVGNLTS. ATP contacts are provided by residues Ala-406 and 446–451; that span reads GTGKTM.

It belongs to the AAA ATPase family. It depends on Mg(2+) as a cofactor.

The protein localises to the nucleus. It carries out the reaction ATP + H2O = ADP + phosphate + H(+). In terms of biological role, involved in DNA double-strand break (DBS) repair via homologous recombination (HR). Limits class II meiotic crossover (CO) formation by regulating the invasion step of meiotic HR. May counteract DMC1 and RAD51-mediated inter-homolog strand invasion to limit CO formation. Functions independently of FANCM. In Arabidopsis thaliana (Mouse-ear cress), this protein is ATPase family AAA domain-containing protein FIGL1.